The sequence spans 459 residues: Argininosuccinate lyase (459 aa).

This sequence belongs to the lyase 1 family. Argininosuccinate lyase subfamily.

Its subcellular location is the cytoplasm. It carries out the reaction 2-(N(omega)-L-arginino)succinate = fumarate + L-arginine. The protein operates within amino-acid biosynthesis; L-arginine biosynthesis; L-arginine from L-ornithine and carbamoyl phosphate: step 3/3. The protein is Argininosuccinate lyase of Prochlorococcus marinus (strain MIT 9215).